A 102-amino-acid polypeptide reads, in one-letter code: Simukunin (102 aa).

Positions M1–A19 are cleaved as a signal peptide. The 51-residue stretch at C24–C74 folds into the BPTI/Kunitz inhibitor domain. Cystine bridges form between C24-C74, C33-C57, and C49-C70. Positions T83–T92 are enriched in basic residues. The segment at T83–D102 is disordered.

The protein belongs to the venom Kunitz-type family. In terms of assembly, interacts with mouse, bovine and human coagulation factor X (F10) (activated). Interacts with host elastase. Salivary gland (at protein level). Not detected in female carcass without head and salivary glands. Not detected in males.

The protein localises to the secreted. Functionally, salivary anticoagulant that inhibits plasma clotting in the host. Strongly inhibits host elastase, coagulation factors Xa (F10) and cathepsin G (CTSG). Inhibits host plasmin (PLG), kallikrein, trypsin, beta-tryptase and coagulation factor XIa (F11). The chain is Simukunin from Simulium vittatum (Striped black fly).